Here is a 1019-residue protein sequence, read N- to C-terminus: Photoactivated adenylate cyclase subunit alpha-like protein ST- (1019 aa).

The 94-residue stretch at 55–148 (LRRLMYLSAS…GRMYGEWHMK (94 aa)) folds into the BLUF 1 domain. One can recognise a Guanylate cyclase 1 domain in the interval 204–332 (VLTFIYLVEF…DCINTASRIT (129 aa)). Residues 467–559 (LITLTYISQA…RVYGTPLDMT (93 aa)) form the BLUF 2 domain. The region spanning 615–744 (VMLATDICSF…EVSARVMAVE (130 aa)) is the Guanylate cyclase 2 domain. Disordered stretches follow at residues 801 to 846 (EDHL…TRPH), 887 to 923 (QIAA…DQPA), and 963 to 993 (EGHR…NRAT). Residues 821-834 (RHQRPGPGRPRRGH) are compositionally biased toward basic residues.

It belongs to the adenylyl cyclase class-4/guanylyl cyclase family. As to quaternary structure, heterotetramer of two alpha and two beta subunits.

It localises to the cell projection. The protein resides in the cilium. It is found in the flagellum. The polypeptide is Photoactivated adenylate cyclase subunit alpha-like protein ST- (Euglena gracilis).